The primary structure comprises 280 residues: Tritrans,polycis-undecaprenyl-diphosphate synthase (geranylgeranyl-diphosphate specific) (280 aa).

Aspartate 57 is an active-site residue. Aspartate 57 contributes to the Mg(2+) binding site. Residues 58–61 (GNRR), arginine 70, histidine 74, and 102–104 (STE) each bind substrate. Asparagine 105 acts as the Proton acceptor in catalysis. Substrate contacts are provided by residues phenylalanine 106, arginine 108, arginine 229, and 235–237 (RIS). Glutamate 248 is a binding site for Mg(2+).

Belongs to the UPP synthase family. Homodimer. The cofactor is Mg(2+).

It carries out the reaction geranylgeranyl diphosphate + 7 isopentenyl diphosphate = tri-trans,hepta-cis-undecaprenyl diphosphate + 7 diphosphate. In terms of biological role, catalyzes the sequential condensation of isopentenyl diphosphate (IPP) with geranylgeranyl diphosphate (GGPP) to yield (2Z,6Z,10Z,14Z,18Z,22Z,26Z,30E,34E,38E)-undecaprenyl diphosphate (tritrans,heptacis-UPP). It is probably the precursor of glycosyl carrier lipids. This Methanocaldococcus jannaschii (strain ATCC 43067 / DSM 2661 / JAL-1 / JCM 10045 / NBRC 100440) (Methanococcus jannaschii) protein is Tritrans,polycis-undecaprenyl-diphosphate synthase (geranylgeranyl-diphosphate specific).